The primary structure comprises 328 residues: m7GpppN-mRNA hydrolase NUDT17 (328 aa).

Residues 90–236 (GVDLGVAVIL…DGTETPGLLP (147 aa)) enclose the Nudix hydrolase domain. The short motif at 127–148 (GHVELEEELLDGGLRELWEESG) is the Nudix box element. The Mg(2+) site is built by glutamate 142 and glutamate 146. The disordered stretch occupies residues 299–328 (PCKSAAYLDPGPAKEEWNMDPLPPNQGSGK).

It belongs to the Nudix hydrolase family. Mg(2+) is required as a cofactor. The cofactor is Mn(2+).

The enzyme catalyses a 5'-end (N(7)-methyl 5'-triphosphoguanosine)-ribonucleoside in mRNA + H2O = N(7)-methyl-GDP + a 5'-end phospho-ribonucleoside in mRNA + 2 H(+). Acts as a decapping enzyme capable of hydrolyzing monomethylated capped RNAs (in vitro). Hydrolyzes monomethylated capped RNA after alpha and beta phosphates to form N(7)-methyl-GDP. Shows low activity towards unmethylated capped RNA. This Homo sapiens (Human) protein is m7GpppN-mRNA hydrolase NUDT17 (NUDT17).